A 1164-amino-acid chain; its full sequence is Auxin response factor 7 (1164 aa).

Positions 127–229 form a DNA-binding region, TF-B3; that stretch reads FCKTLTASDT…QLLLGIRRAN (103 aa). Disordered stretches follow at residues 451 to 505, 536 to 555, 570 to 728, 765 to 858, and 903 to 930; these read HNNL…QQQL, QQLQ…QQQQ, HQQP…LLQQ, FLSP…SSSG, and KSKA…GENN. Polar residues predominate over residues 464-489; that stretch reads LSFQTPHGGISSSNLQFNKQNQQAPM. Residues 570-635 show a composition bias toward low complexity; that stretch reads HQQPLQQQTQ…SQQASTHHLQ (66 aa). Polar residues predominate over residues 637 to 651; sequence QLVSGSMASSVITPP. The segment covering 652-671 has biased composition (low complexity); it reads SSSLNQSFQQQQQQSKQLQQ. The span at 678–710 shows a compositional bias: polar residues; that stretch reads ASTSQSSVIETSKSSSNLMSAPPQETQFSRQVE. Low complexity-rich tracts occupy residues 711-728 and 765-790; these read QQQP…LLQQ and FLSP…TLSQ. Polar residues predominate over residues 791 to 808; it reads GHQFPSSCTNNGLSTLQP. The segment covering 841–851 has biased composition (low complexity); sequence PSSSTSPSTNN. Residues 903 to 921 are compositionally biased toward polar residues; it reads KSKASLTDHQLEASASGTS. In terms of domain architecture, PB1 spans 1037–1130; the sequence is RTYTKVQKRG…EVQQMSLDGN (94 aa). The disordered stretch occupies residues 1145–1164; it reads DSGNAWRGHYDDNSATSFNR.

It belongs to the ARF family. Homodimers and heterodimers. Interacts with the auxin-responsive proteins IAA1 and IAA12 (BODENLOS). Interacts (via PB1 domain) with IAA17 (via PB1 domain). Interacts with IAA19. Interacts with ARF5. Binds to JMJ30. Binds to ATXR2 in the nucleus. As to expression, expressed in the whole plant.

The protein resides in the nucleus. Auxin response factors (ARFs) are transcriptional factors that bind specifically to the DNA sequence 5'-TGTCTC-3' found in the auxin-responsive promoter elements (AuxREs). Acts as a transcriptional activator of several tropic stimulus-induced (TSI) genes, including SAUR50. Formation of heterodimers with Aux/IAA proteins may alter their ability to modulate early auxin response genes expression. Required for differential growth responses of aerial tissues. Involved in ethylene responses. Regulates lateral root formation through direct regulation of LBD16 and/or LBD29. Functionally redundant with ARF19. Mediates embryo axis formation and vascular tissues differentiation. Functionally redundant with ARF5. Involved in cellular dedifferentiation during callus formation on callus-inducing medium (CIM) and in an ATXR2-dependent manner. In Arabidopsis thaliana (Mouse-ear cress), this protein is Auxin response factor 7.